The chain runs to 472 residues: Glutamyl-tRNA(Gln) amidotransferase subunit A (472 aa).

Catalysis depends on charge relay system residues K69 and S144. Residue S168 is the Acyl-ester intermediate of the active site.

The protein belongs to the amidase family. GatA subfamily. As to quaternary structure, heterotrimer of A, B and C subunits.

It carries out the reaction L-glutamyl-tRNA(Gln) + L-glutamine + ATP + H2O = L-glutaminyl-tRNA(Gln) + L-glutamate + ADP + phosphate + H(+). Its function is as follows. Allows the formation of correctly charged Gln-tRNA(Gln) through the transamidation of misacylated Glu-tRNA(Gln) in organisms which lack glutaminyl-tRNA synthetase. The reaction takes place in the presence of glutamine and ATP through an activated gamma-phospho-Glu-tRNA(Gln). The polypeptide is Glutamyl-tRNA(Gln) amidotransferase subunit A (Sulfurisphaera tokodaii (strain DSM 16993 / JCM 10545 / NBRC 100140 / 7) (Sulfolobus tokodaii)).